The chain runs to 552 residues: Non-structural protein NS1 (552 aa).

The protein belongs to the orbivirus non-structural protein NS1 family.

In Antilocapra americana (Pronghorn), this protein is Non-structural protein NS1 (Segment-5).